We begin with the raw amino-acid sequence, 1278 residues long: Dynactin subunit 1 (1278 aa).

Residues 1 to 25 (MAQSKRHVYSRTPSGSRMSAEASAR) are disordered. A CAP-Gly domain is found at 48 to 90 (GATLFATGKWVGVILDEAKGKNDGTVQGRKYFTCDEGHGIFVR). The tract at residues 100-223 (GADTTSPETP…SKEEEGLRAQ (124 aa)) is disordered. Positions 102-114 (DTTSPETPDSSAS) are enriched in polar residues. Thr108 is subject to Phosphothreonine. Residues 129-152 (SKLRGLKPKKAPTARKTTTRRPKP) are compositionally biased toward basic residues. Phosphothreonine; by SLK is present on residues Thr145, Thr146, and Thr147. Residues 161–184 (AGASSSLGPSGSASAGELSSSEPS) are compositionally biased toward low complexity. Position 179 is a phosphoserine; by PLK1 (Ser179). Position 212 is a phosphoserine; by CDK1 (Ser212). Coiled coils occupy residues 213–547 (PSKE…RQQQ), 943–1049 (LKLE…EGLR), and 1182–1211 (SAQL…KETV). The segment covering 214 to 223 (SKEEEGLRAQ) has biased composition (basic and acidic residues). The segment at 911 to 1278 (EYDAERPPSK…LHQLHSRLIS (368 aa)) is interaction with HPS6.

Belongs to the dynactin 150 kDa subunit family. In terms of assembly, monomer and homodimer. Subunit of dynactin, a multiprotein complex part of a tripartite complex with dynein and a adapter, such as BICDL1, BICD2 or HOOK3. The dynactin complex is built around ACTR1A/ACTB filament and consists of an actin-related filament composed of a shoulder domain, a pointed end and a barbed end. Its length is defined by its flexible shoulder domain. The soulder is composed of 2 DCTN1 subunits, 4 DCTN2 and 2 DCTN3. DCTN1/p150(glued) binds directly to microtubules and to cytoplasmic dynein. The 4 DCNT2 (via N-terminus) bind the ACTR1A filament and act as molecular rulers to determine the length. The pointed end is important for binding dynein-dynactin cargo adapters. Consists of 4 subunits: ACTR10, DCNT4, DCTN5 and DCTN6. The barbed end is composed of a CAPZA1:CAPZB heterodimers, which binds ACTR1A/ACTB filament and dynactin and stabilizes dynactin. Interacts with the C-terminus of MAPRE1, MAPRE2 and MAPRE3. Interacts (via C-terminus) with SNX6. Interacts with CLN3, DYNAP, ECPAS and FBXL5. Interacts with MISP; this interaction regulates its distribution at the cell cortex. Interacts with CEP131. Interacts with CEP126. Interacts with CLIP1. Interacts with dynein intermediate chain and dynein heavy chain. Interacts with PLK1 (via POLO-box domain). Interacts with TBCB. Binds preferentially to tyrosinated microtubules than to detyrosinated microtubules. Interacts with PARD6A. Interacts with HPS6. Interacts with KIF3A. Interacts with BICD2. Interacts with DST (isoform 9). Interacts with DST (isoform 1). Identified in a complex with MREG and RILP. Interacts with BCCIP (isoform 2/alpha). Interacts with DCDC1. Interacts with AKNA. Interacts with DYNC1I2. Interacts with RUFY3 and RUFY4. Post-translationally, ubiquitinated by a SCF complex containing FBXL5, leading to its degradation by the proteasome. Phosphorylation by SLK at Thr-145, Thr-146 and Thr-147 targets DCTN1 to the centrosome. It is uncertain if SLK phosphorylates all three threonines or one or two of them. PLK1-mediated phosphorylation at Ser-179 is essential for its localization in the nuclear envelope, promotes its dissociation from microtubules during early mitosis and positively regulates nuclear envelope breakdown during prophase. Brain.

The protein resides in the cytoplasm. It is found in the cytoskeleton. Its subcellular location is the microtubule organizing center. The protein localises to the centrosome. It localises to the centriole. The protein resides in the spindle. It is found in the nucleus envelope. Its subcellular location is the cell cortex. Its function is as follows. Part of the dynactin complex that activates the molecular motor dynein for ultra-processive transport along microtubules. Plays a key role in dynein-mediated retrograde transport of vesicles and organelles along microtubules by recruiting and tethering dynein to microtubules. Binds to both dynein and microtubules providing a link between specific cargos, microtubules and dynein. Essential for targeting dynein to microtubule plus ends, recruiting dynein to membranous cargos and enhancing dynein processivity (the ability to move along a microtubule for a long distance without falling off the track). Can also act as a brake to slow the dynein motor during motility along the microtubule. Can regulate microtubule stability by promoting microtubule formation, nucleation and polymerization and by inhibiting microtubule catastrophe in neurons. Inhibits microtubule catastrophe by binding both to microtubules and to tubulin, leading to enhanced microtubule stability along the axon. Plays a role in metaphase spindle orientation. Plays a role in centriole cohesion and subdistal appendage organization and function. Its recruitment to the centriole in a KIF3A-dependent manner is essential for the maintenance of centriole cohesion and the formation of subdistal appendage. Also required for microtubule anchoring at the mother centriole. Plays a role in primary cilia formation. This is Dynactin subunit 1 from Homo sapiens (Human).